We begin with the raw amino-acid sequence, 407 residues long: Phosphonoacetate hydrolase (407 aa).

The Zn(2+) site is built by Asp25, Thr64, Asp202, His206, Asp241, His242, and His368. Substrate contacts are provided by Thr64 and Asp202. Substrate contacts are provided by His242 and His368.

Belongs to the alkaline phosphatase family. PhnA subfamily. Homodimer. The cofactor is Zn(2+).

The enzyme catalyses phosphonoacetate + H2O = acetate + phosphate + H(+). Its function is as follows. Specifically hydrolyzes phosphonoacetate. Does not have activity on other organophosphonates or acetates. This chain is Phosphonoacetate hydrolase, found in Pseudomonas putida (Arthrobacter siderocapsulatus).